Consider the following 180-residue polypeptide: Shikimate kinase (180 aa).

14–19 (GAGKSS) provides a ligand contact to ATP. Residue serine 18 participates in Mg(2+) binding. Substrate is bound by residues aspartate 36, arginine 60, and glycine 82. Arginine 120 is an ATP binding site. Arginine 139 serves as a coordination point for substrate.

This sequence belongs to the shikimate kinase family. In terms of assembly, monomer. The cofactor is Mg(2+).

It is found in the cytoplasm. The catalysed reaction is shikimate + ATP = 3-phosphoshikimate + ADP + H(+). The protein operates within metabolic intermediate biosynthesis; chorismate biosynthesis; chorismate from D-erythrose 4-phosphate and phosphoenolpyruvate: step 5/7. In terms of biological role, catalyzes the specific phosphorylation of the 3-hydroxyl group of shikimic acid using ATP as a cosubstrate. The chain is Shikimate kinase from Xylella fastidiosa (strain 9a5c).